The primary structure comprises 152 residues: MRIGYGEDSHRLEEGRPLYLCGLLIPSPVGALAHSDGDAALHALTDALLSAYGLGDIGLLFPDTDPRWRGERSEVFLREALRLVEARGARLLQASLVLTLDRPKLGPHRKALVDSLARLLRLPQDRIGLTFKTSEGLAPSHVQARAVVLLDG.

Aspartate 8 and histidine 10 together coordinate a divalent metal cation. Residues 8-10 (DSH) and 34-35 (HS) each bind 4-CDP-2-C-methyl-D-erythritol 2-phosphate. Histidine 42 lines the a divalent metal cation pocket. Residues 56-58 (DIG) and 61-65 (FPDTD) each bind 4-CDP-2-C-methyl-D-erythritol 2-phosphate.

It belongs to the IspF family. As to quaternary structure, homotrimer. Requires a divalent metal cation as cofactor.

The catalysed reaction is 4-CDP-2-C-methyl-D-erythritol 2-phosphate = 2-C-methyl-D-erythritol 2,4-cyclic diphosphate + CMP. Its pathway is isoprenoid biosynthesis; isopentenyl diphosphate biosynthesis via DXP pathway; isopentenyl diphosphate from 1-deoxy-D-xylulose 5-phosphate: step 4/6. Functionally, involved in the biosynthesis of isopentenyl diphosphate (IPP) and dimethylallyl diphosphate (DMAPP), two major building blocks of isoprenoid compounds. Catalyzes the conversion of 4-diphosphocytidyl-2-C-methyl-D-erythritol 2-phosphate (CDP-ME2P) to 2-C-methyl-D-erythritol 2,4-cyclodiphosphate (ME-CPP) with a corresponding release of cytidine 5-monophosphate (CMP). The protein is 2-C-methyl-D-erythritol 2,4-cyclodiphosphate synthase of Thermus thermophilus (strain ATCC BAA-163 / DSM 7039 / HB27).